The following is a 149-amino-acid chain: MAGWFTETQNKAYKDAMSALNANPTIDLENSYVPLQNQYKDIRVDEHPEYLHDKEWAQATYNGDLVGIKTSDVMLGVYVPKEEDVGLGMELGYAMSQGKYVLLVIPDELYGESINLMSWGVADNVIKMSELATFDFNRPRYNFYDGAVY.

Residue Glu-90 is the Nucleophile of the active site.

The protein belongs to the nucleoside deoxyribosyltransferase family.

It carries out the reaction 2-deoxy-D-ribosyl-base(1) + base(2) = 2-deoxy-D-ribosyl-base(2) + base(1).. Its pathway is nucleotide metabolism; nucleotide salvage pathway. Catalyzes the cleavage of the glycosidic bond of 2'-deoxyribonucleosides and the transfer of the deoxyribosyl moiety to an acceptor purine or pyrimidine base. The polypeptide is Nucleoside deoxyribosyltransferase (ntd) (Lactobacillus johnsonii (strain CNCM I-12250 / La1 / NCC 533)).